The chain runs to 274 residues: Penicillin-insensitive murein endopeptidase (274 aa).

A signal peptide spans 1–19 (MNKTAIALLALLASSASLA). Disulfide bonds link C44–C265, C187–C235, and C216–C223. Zn(2+)-binding residues include H110, H113, D120, D147, H150, and H211. Residues 227 to 274 (PLPPPGDGCGAELQSWFEPPKPGTTKPEKKTPPPLPPSCQALLDEHVI) are disordered.

The protein belongs to the peptidase M74 family. Dimer. Requires Zn(2+) as cofactor.

Its subcellular location is the periplasm. Functionally, murein endopeptidase that cleaves the D-alanyl-meso-2,6-diamino-pimelyl amide bond that connects peptidoglycan strands. Likely plays a role in the removal of murein from the sacculus. The protein is Penicillin-insensitive murein endopeptidase of Escherichia coli (strain ATCC 8739 / DSM 1576 / NBRC 3972 / NCIMB 8545 / WDCM 00012 / Crooks).